We begin with the raw amino-acid sequence, 310 residues long: MEPAGAGREGWDGTMGDDPRQSQMLEAIEDFCDYLILVVGRSDATVRGYRSDLRHMAATIPDLTEFTLPNLRAWLGRAVEEGKSRATLARRTASVKSFSTWAVKNGLISGDEAARLVSPKVTRNLPRVLGEVQAGEFMGSAAADTEDEFRRDSAILELLYATGMRVSELCGLDLGDVDHHRRMVRVLGKGDKERMIPFGKAAADALEQWLEARDRMAKVEDAMFVGVRGGRIDARQIRRIVDRTAQVAGADHLSPHSLRHTAATHLLDGGADLRQVQEMLGHSSLQTTQIYTHVSSQRLLEAFRQAHPRA.

The Core-binding (CB) domain maps to S22–V103. One can recognise a Tyr recombinase domain in the interval N124–R304. Active-site residues include R165, K189, H256, R259, and H282. Y291 (O-(3'-phospho-DNA)-tyrosine intermediate) is an active-site residue.

Belongs to the 'phage' integrase family. XerC subfamily. In terms of assembly, forms a cyclic heterotetrameric complex composed of two molecules of XerC and two molecules of XerD.

It localises to the cytoplasm. In terms of biological role, site-specific tyrosine recombinase, which acts by catalyzing the cutting and rejoining of the recombining DNA molecules. The XerC-XerD complex is essential to convert dimers of the bacterial chromosome into monomers to permit their segregation at cell division. It also contributes to the segregational stability of plasmids. The protein is Tyrosine recombinase XerC of Corynebacterium efficiens (strain DSM 44549 / YS-314 / AJ 12310 / JCM 11189 / NBRC 100395).